The following is a 175-amino-acid chain: Alkyl hydroperoxide reductase AhpD (175 aa).

Residue Cys130 is the Proton donor of the active site. Cysteines 130 and 133 form a disulfide. The active-site Cysteine sulfenic acid (-SOH) intermediate is the Cys133.

It belongs to the AhpD family. As to quaternary structure, homotrimer.

The catalysed reaction is N(6)-[(R)-dihydrolipoyl]-L-lysyl-[lipoyl-carrier protein] + a hydroperoxide = N(6)-[(R)-lipoyl]-L-lysyl-[lipoyl-carrier protein] + an alcohol + H2O. Antioxidant protein with alkyl hydroperoxidase activity. Required for the reduction of the AhpC active site cysteine residues and for the regeneration of the AhpC enzyme activity. The polypeptide is Alkyl hydroperoxide reductase AhpD (Mycobacteroides abscessus (strain ATCC 19977 / DSM 44196 / CCUG 20993 / CIP 104536 / JCM 13569 / NCTC 13031 / TMC 1543 / L948) (Mycobacterium abscessus)).